The chain runs to 331 residues: UPF0194 membrane protein YbhG (331 aa).

The signal sequence occupies residues 1 to 19 (MKKPVVIGLAIAAIVAVIA). Residues 107–208 (EEIAQAAAAV…LDLQDTTLIA (102 aa)) adopt a coiled-coil conformation.

The protein belongs to the UPF0194 family.

Its subcellular location is the periplasm. The chain is UPF0194 membrane protein YbhG from Salmonella gallinarum (strain 287/91 / NCTC 13346).